The following is a 381-amino-acid chain: Complement decay-accelerating factor (381 aa).

Residues 1 to 34 form the signal peptide; that stretch reads MTVARPSVPAALPLLGELPRLLLLVLLCLPAVWG. 4 Sushi domains span residues 35 to 96, 96 to 160, 161 to 222, and 223 to 285; these read DCGL…FCNR, RSCE…FCKK, KSCP…ECRE, and IYCP…ECRG. Intrachain disulfides connect Cys36/Cys81 and Cys65/Cys94. N-linked (GlcNAc...) asparagine glycosylation occurs at Asn95. Cystine bridges form between Cys98–Cys145, Cys129–Cys158, Cys163–Cys204, Cys190–Cys220, Cys225–Cys267, and Cys253–Cys283. A disordered region spans residues 277-354; sequence SGPPPECRGK…PNKGSGTTSG (78 aa). The segment covering 287–309 has biased composition (polar residues); that stretch reads SLTSKVPPTVQKPTTVNVPTTEV. Residues 310–328 are compositionally biased toward low complexity; it reads SPTSQKTTTKTTTPNAQAT. The GPI-anchor amidated serine moiety is linked to residue Ser353. A propeptide spans 354–381 (removed in mature form); sequence GTTRLLSGHTCFTLTGLLGTLVTMGLLT.

It belongs to the receptors of complement activation (RCA) family. In terms of assembly, monomer (major form) and non-disulfide-linked, covalent homodimer (minor form). Interacts with ADGRE5. (Microbial infection) Interacts with coxsackievirus A21, coxsackieviruses B1, B3 and B5 capsid proteins. As to quaternary structure, (Microbial infection) Interacts with human enterovirus 70 and D68 capsid proteins. In terms of assembly, (Microbial infection) Interacts with human echoviruses 6, 7, 11, 12, 20 and 21 capsid proteins. Post-translationally, the Ser/Thr-rich domain is heavily O-glycosylated. Expressed on the plasma membranes of all cell types that are in intimate contact with plasma complement proteins. It is also found on the surfaces of epithelial cells lining extracellular compartments, and variants of the molecule are present in body fluids and in extracellular matrix.

It is found in the cell membrane. The protein localises to the secreted. In terms of biological role, this protein recognizes C4b and C3b fragments that condense with cell-surface hydroxyl or amino groups when nascent C4b and C3b are locally generated during C4 and c3 activation. Interaction of daf with cell-associated C4b and C3b polypeptides interferes with their ability to catalyze the conversion of C2 and factor B to enzymatically active C2a and Bb and thereby prevents the formation of C4b2a and C3bBb, the amplification convertases of the complement cascade. Inhibits complement activation by destabilizing and preventing the formation of C3 and C5 convertases, which prevents complement damage. Functionally, (Microbial infection) Acts as a receptor for Coxsackievirus A21, coxsackieviruses B1, B3 and B5. (Microbial infection) Acts as a receptor for Human enterovirus 70 and D68. Its function is as follows. (Microbial infection) Acts as a receptor for Human echoviruses 6, 7, 11, 12, 20 and 21. This Homo sapiens (Human) protein is Complement decay-accelerating factor (CD55).